We begin with the raw amino-acid sequence, 431 residues long: Adenylosuccinate synthetase (431 aa).

GTP contacts are provided by residues 13-19 (GDEGKGK) and 41-43 (GHT). The Proton acceptor role is filled by Asp14. Residues Asp14 and Gly41 each contribute to the Mg(2+) site. IMP is bound by residues 14 to 17 (DEGK), 39 to 42 (NAGH), Thr130, Arg144, Gln225, Thr240, and Arg304. His42 acts as the Proton donor in catalysis. 300–306 (ATTGRQR) contributes to the substrate binding site. Residues Arg306, 332–334 (KLD), and 414–416 (STG) contribute to the GTP site.

This sequence belongs to the adenylosuccinate synthetase family. Homodimer. Mg(2+) is required as a cofactor.

The protein localises to the cytoplasm. The catalysed reaction is IMP + L-aspartate + GTP = N(6)-(1,2-dicarboxyethyl)-AMP + GDP + phosphate + 2 H(+). Its pathway is purine metabolism; AMP biosynthesis via de novo pathway; AMP from IMP: step 1/2. Plays an important role in the de novo pathway of purine nucleotide biosynthesis. Catalyzes the first committed step in the biosynthesis of AMP from IMP. The polypeptide is Adenylosuccinate synthetase (Saccharophagus degradans (strain 2-40 / ATCC 43961 / DSM 17024)).